Consider the following 256-residue polypeptide: Carboxysome shell protein CsoS1D (256 aa).

The disordered stretch occupies residues 1–24 (MEPTSSLNRGDRKKGSSLVTGSEV). BMC circularly permuted domains follow at residues 55 to 157 (ELRT…RTKP) and 158 to 256 (STSW…ISNY). The Gates the pore signature appears at 120–121 (ER).

Belongs to the EutL/PduB family. Homotrimer. Forms a dimer of stacked trimers, the same faces interact. A CsoS1-CsoS1D-CsoS2 complex can be isolated following expression in E.coli.

Its subcellular location is the carboxysome. Its function is as follows. Part of the carboxysome shell, a polyhedral inclusion where RuBisCO (ribulose bisphosphate carboxylase, cbbL-cbbS) is sequestered. It may control transport of RuBisCO reactants in and out of the carboxysome. There are estimated to be 6 CsoS1D hexamers per carboxysome. The protein is Carboxysome shell protein CsoS1D of Prochlorococcus marinus subsp. pastoris (strain CCMP1986 / NIES-2087 / MED4).